A 446-amino-acid chain; its full sequence is Trigger factor (446 aa).

Residues 163 to 248 (GDRLVIDFEG…VKEIKKKNLL (86 aa)) form the PPIase FKBP-type domain.

Belongs to the FKBP-type PPIase family. Tig subfamily.

The protein localises to the cytoplasm. The enzyme catalyses [protein]-peptidylproline (omega=180) = [protein]-peptidylproline (omega=0). Functionally, involved in protein export. Acts as a chaperone by maintaining the newly synthesized protein in an open conformation. Functions as a peptidyl-prolyl cis-trans isomerase. This is Trigger factor from Natranaerobius thermophilus (strain ATCC BAA-1301 / DSM 18059 / JW/NM-WN-LF).